Consider the following 1132-residue polypeptide: Rho GTPase-activating protein gacE (1132 aa).

A Rho-GAP domain is found at 76–262 (LEMNKILKSE…FLISNYLNVF (187 aa)). Disordered regions lie at residues 279–354 (NELL…SSPI) and 472–517 (NSTT…SLIN). Residues 281 to 301 (LLNNNNNNNNVIMPTTTTTTT) are compositionally biased toward low complexity. Residues 302–311 (SASSSILPTD) show a composition bias toward polar residues. Composition is skewed to low complexity over residues 328-354 (SIPL…SSPI), 473-498 (STTT…STTT), and 507-517 (SNSASNNSLIN).

The protein resides in the cytoplasm. Functionally, rho GTPase-activating protein involved in the signal transduction pathway. This Dictyostelium discoideum (Social amoeba) protein is Rho GTPase-activating protein gacE (gacE).